A 258-amino-acid chain; its full sequence is Small ribosomal subunit protein uS2 (258 aa).

Belongs to the universal ribosomal protein uS2 family.

The sequence is that of Small ribosomal subunit protein uS2 from Granulibacter bethesdensis (strain ATCC BAA-1260 / CGDNIH1).